Reading from the N-terminus, the 71-residue chain is UPF0337 protein PPA1427 (71 aa).

The segment at 20–46 (EKIGGLTDDSDLKSAGADQKASGKVAQ) is disordered.

Belongs to the UPF0337 (CsbD) family.

The protein is UPF0337 protein PPA1427 of Cutibacterium acnes (strain DSM 16379 / KPA171202) (Propionibacterium acnes).